The primary structure comprises 434 residues: MQSEAQSPRSSQICSTEPVFGGHQPRRVSHAVDVRWGGQLVTIGGDAPVRVQSMTNTDTADAIGTAIQIKELANAGSELVRITVNTPEAAAAVPAIREQLDRMGVTVPLVGDFHYNGHLLLRDYPGCAESLSKYRINPGNVGQGAKRDTQFAQMIEAAAKYDKPVRIGVNWGSLDQDLLARMMDENGARAQPWDAQSVMYEALIQSAIGSAERAVELGLGRDRIVLSCKVSGVQDLIAVYRELGRRCGFALHLGLTEAGMGSKGIVASTAALGVLLQEGIGDTIRISLTPEPGASRTGEVIVGQEILQTMGLRSFAPMVIACPGCGRTTSTLFQELAMQIQTYLREQMPVWRKEYPGVEKMNVAVMGCIVNGPGESKHANIGISLPGSGENPAAPVFIDGEKVKTLRGERIAEEFQQIVSDYVARNYGRTEALN.

Residues 1 to 15 (MQSEAQSPRSSQICS) show a composition bias toward polar residues. Residues 1–24 (MQSEAQSPRSSQICSTEPVFGGHQ) form a disordered region. Positions 322, 325, 368, and 375 each coordinate [4Fe-4S] cluster.

Belongs to the IspG family. [4Fe-4S] cluster is required as a cofactor.

It catalyses the reaction (2E)-4-hydroxy-3-methylbut-2-enyl diphosphate + oxidized [flavodoxin] + H2O + 2 H(+) = 2-C-methyl-D-erythritol 2,4-cyclic diphosphate + reduced [flavodoxin]. It participates in isoprenoid biosynthesis; isopentenyl diphosphate biosynthesis via DXP pathway; isopentenyl diphosphate from 1-deoxy-D-xylulose 5-phosphate: step 5/6. Converts 2C-methyl-D-erythritol 2,4-cyclodiphosphate (ME-2,4cPP) into 1-hydroxy-2-methyl-2-(E)-butenyl 4-diphosphate. In Burkholderia cenocepacia (strain ATCC BAA-245 / DSM 16553 / LMG 16656 / NCTC 13227 / J2315 / CF5610) (Burkholderia cepacia (strain J2315)), this protein is 4-hydroxy-3-methylbut-2-en-1-yl diphosphate synthase (flavodoxin).